Consider the following 346-residue polypeptide: Glycosyltransferase 1 domain-containing protein 1 (346 aa).

A signal peptide spans 1-16 (MRLLFLAVLRPHTGNA).

Belongs to the glycosyltransferase group 1 family. Glycosyltransferase 4 subfamily.

It is found in the secreted. In Pongo abelii (Sumatran orangutan), this protein is Glycosyltransferase 1 domain-containing protein 1 (GLT1D1).